The primary structure comprises 338 residues: Ketol-acid reductoisomerase (NADP(+)) (338 aa).

The KARI N-terminal Rossmann domain maps to 1 to 181 (MKVYYDKDCN…GGGRSGIIET (181 aa)). NADP(+) is bound by residues 24–27 (YGSQ), Arg47, Ser50, Ser52, and 82–85 (DETQ). His107 is a catalytic residue. Gly133 contributes to the NADP(+) binding site. Positions 182 to 327 (NFREETETDL…ARLRAMMPWI (146 aa)) constitute a KARI C-terminal knotted domain. Residues Asp190, Glu194, Glu226, and Glu230 each coordinate Mg(2+). A substrate-binding site is contributed by Ser251.

The protein belongs to the ketol-acid reductoisomerase family. Mg(2+) serves as cofactor.

The catalysed reaction is (2R)-2,3-dihydroxy-3-methylbutanoate + NADP(+) = (2S)-2-acetolactate + NADPH + H(+). It carries out the reaction (2R,3R)-2,3-dihydroxy-3-methylpentanoate + NADP(+) = (S)-2-ethyl-2-hydroxy-3-oxobutanoate + NADPH + H(+). The protein operates within amino-acid biosynthesis; L-isoleucine biosynthesis; L-isoleucine from 2-oxobutanoate: step 2/4. It participates in amino-acid biosynthesis; L-valine biosynthesis; L-valine from pyruvate: step 2/4. Its function is as follows. Involved in the biosynthesis of branched-chain amino acids (BCAA). Catalyzes an alkyl-migration followed by a ketol-acid reduction of (S)-2-acetolactate (S2AL) to yield (R)-2,3-dihydroxy-isovalerate. In the isomerase reaction, S2AL is rearranged via a Mg-dependent methyl migration to produce 3-hydroxy-3-methyl-2-ketobutyrate (HMKB). In the reductase reaction, this 2-ketoacid undergoes a metal-dependent reduction by NADPH to yield (R)-2,3-dihydroxy-isovalerate. The sequence is that of Ketol-acid reductoisomerase (NADP(+)) from Pelobacter propionicus (strain DSM 2379 / NBRC 103807 / OttBd1).